Here is a 454-residue protein sequence, read N- to C-terminus: Sensor histidine kinase YkoH (454 aa).

Residues 1 to 12 (MKLKTKIHLYTS) are Cytoplasmic-facing. A helical transmembrane segment spans residues 13 to 33 (ISLLILLILVHTAVYLIFSSA). Residues 34–153 (LTSKDAARLA…NTEESLFLLK (120 aa)) are Extracellular-facing. A helical membrane pass occupies residues 154–174 (IILIAASAAVCIASFFAGSLL). The Cytoplasmic portion of the chain corresponds to 175-454 (ARRIINPIRR…QFSEQNGGGR (280 aa)). Residues 176–230 (RRIINPIRRLMITMKDIQRDKEFKTISLEGQSNDELYQMGLTFNEMAMMLKEHYD) enclose the HAMP domain. The region spanning 238-450 (DASHELKTPL…AVTMQFSEQN (213 aa)) is the Histidine kinase domain. At His-241 the chain carries Phosphohistidine; by autocatalysis.

The protein resides in the cell membrane. It carries out the reaction ATP + protein L-histidine = ADP + protein N-phospho-L-histidine.. In terms of biological role, probable member of the two-component regulatory system YkoH/YkoG. Potentially phosphorylates YkoG. This Bacillus subtilis (strain 168) protein is Sensor histidine kinase YkoH (ykoH).